A 539-amino-acid polypeptide reads, in one-letter code: Protoporphyrinogen oxidase (539 aa).

FAD contacts are provided by residues 18–23 (GGGVSG), 43–44 (ES), Trp51, 70–73 (GPRT), Val300, and 521–523 (PGV).

The protein belongs to the protoporphyrinogen/coproporphyrinogen oxidase family. Protoporphyrinogen oxidase subfamily. FAD serves as cofactor.

The protein localises to the mitochondrion inner membrane. The enzyme catalyses protoporphyrinogen IX + 3 O2 = protoporphyrin IX + 3 H2O2. Its pathway is porphyrin-containing compound metabolism; protoporphyrin-IX biosynthesis; protoporphyrin-IX from protoporphyrinogen-IX: step 1/1. In terms of biological role, catalyzes the 6-electron oxidation of protoporphyrinogen-IX to form protoporphyrin-IX. The protein is Protoporphyrinogen oxidase of Saccharomyces cerevisiae (strain ATCC 204508 / S288c) (Baker's yeast).